The sequence spans 304 residues: Elongation factor Ts (304 aa).

The interval 80-83 (TDFV) is involved in Mg(2+) ion dislocation from EF-Tu.

Belongs to the EF-Ts family.

The protein resides in the cytoplasm. Functionally, associates with the EF-Tu.GDP complex and induces the exchange of GDP to GTP. It remains bound to the aminoacyl-tRNA.EF-Tu.GTP complex up to the GTP hydrolysis stage on the ribosome. The chain is Elongation factor Ts from Clostridium tetani (strain Massachusetts / E88).